We begin with the raw amino-acid sequence, 173 residues long: RNA pyrophosphohydrolase (173 aa).

The Nudix hydrolase domain occupies 6–149 (GFRANVGIII…KRDVYRKVMK (144 aa)). The short motif at 38-59 (GGVDEGESAEEAMYRELYEEVG) is the Nudix box element.

The protein belongs to the Nudix hydrolase family. RppH subfamily. Requires a divalent metal cation as cofactor.

In terms of biological role, accelerates the degradation of transcripts by removing pyrophosphate from the 5'-end of triphosphorylated RNA, leading to a more labile monophosphorylated state that can stimulate subsequent ribonuclease cleavage. The polypeptide is RNA pyrophosphohydrolase (Shewanella piezotolerans (strain WP3 / JCM 13877)).